We begin with the raw amino-acid sequence, 595 residues long: NADH-quinone oxidoreductase subunit C/D (595 aa).

An NADH dehydrogenase I subunit C region spans residues 1 to 186; that stretch reads MVTDNSKATD…TPYFLNNAKQ (186 aa). The tract at residues 210–595 is NADH dehydrogenase I subunit D; sequence DFMFLNLGPN…IDIVMADTDR (386 aa).

In the N-terminal section; belongs to the complex I 30 kDa subunit family. It in the C-terminal section; belongs to the complex I 49 kDa subunit family. As to quaternary structure, NDH-1 is composed of 13 different subunits. Subunits NuoB, CD, E, F, and G constitute the peripheral sector of the complex.

It localises to the cell inner membrane. It carries out the reaction a quinone + NADH + 5 H(+)(in) = a quinol + NAD(+) + 4 H(+)(out). NDH-1 shuttles electrons from NADH, via FMN and iron-sulfur (Fe-S) centers, to quinones in the respiratory chain. The immediate electron acceptor for the enzyme in this species is believed to be ubiquinone. Couples the redox reaction to proton translocation (for every two electrons transferred, four hydrogen ions are translocated across the cytoplasmic membrane), and thus conserves the redox energy in a proton gradient. This is NADH-quinone oxidoreductase subunit C/D from Psychrobacter sp. (strain PRwf-1).